Consider the following 684-residue polypeptide: Glycine--tRNA ligase beta subunit (684 aa).

Belongs to the class-II aminoacyl-tRNA synthetase family. As to quaternary structure, tetramer of two alpha and two beta subunits.

The protein localises to the cytoplasm. The catalysed reaction is tRNA(Gly) + glycine + ATP = glycyl-tRNA(Gly) + AMP + diphosphate. The chain is Glycine--tRNA ligase beta subunit from Pseudomonas fluorescens (strain Pf0-1).